The following is a 767-amino-acid chain: 5-methyltetrahydropteroyltriglutamate--homocysteine methyltransferase (767 aa).

Lys-126 lines the 5-methyltetrahydropteroyltri-L-glutamate pocket. L-homocysteine contacts are provided by residues 445–447 (IGS) and Glu-498. Residues 445–447 (IGS) and Glu-498 each bind L-methionine. 5-methyltetrahydropteroyltri-L-glutamate-binding positions include 529-530 (RC) and Trp-575. Asp-613 serves as a coordination point for L-homocysteine. Asp-613 provides a ligand contact to L-methionine. Glu-619 is a 5-methyltetrahydropteroyltri-L-glutamate binding site. Residues His-655, Cys-657, and Glu-679 each coordinate Zn(2+). His-708 (proton donor) is an active-site residue. A Zn(2+)-binding site is contributed by Cys-740.

Belongs to the vitamin-B12 independent methionine synthase family. The cofactor is Zn(2+).

It carries out the reaction 5-methyltetrahydropteroyltri-L-glutamate + L-homocysteine = tetrahydropteroyltri-L-glutamate + L-methionine. It participates in amino-acid biosynthesis; L-methionine biosynthesis via de novo pathway; L-methionine from L-homocysteine (MetE route): step 1/1. Catalyzes the transfer of a methyl group from 5-methyltetrahydrofolate to homocysteine resulting in methionine formation. The polypeptide is 5-methyltetrahydropteroyltriglutamate--homocysteine methyltransferase (Psychromonas ingrahamii (strain DSM 17664 / CCUG 51855 / 37)).